Reading from the N-terminus, the 1153-residue chain is Bifunctional dioxygenase (DOX)-epoxy alcohol synthase (EAS) (1153 aa).

The span at serine 46 to serine 56 shows a compositional bias: low complexity. The tract at residues serine 46–threonine 113 is disordered. The span at threonine 57–glycine 74 shows a compositional bias: polar residues. The span at glutamate 81 to serine 98 shows a compositional bias: basic and acidic residues. Positions threonine 177–valine 525 are fatty acid alpha-dioxygenase. Histidine 276 serves as a coordination point for heme b. Tyrosine 454 is an active-site residue. Histidine 457 lines the heme b pocket. Residues arginine 732–glutamate 1153 are epoxy alcohol synthase. Cysteine 1086 is a heme binding site.

This sequence in the N-terminal section; belongs to the peroxidase family. In the C-terminal section; belongs to the cytochrome P450 family. In terms of assembly, homotetramer. Requires heme b as cofactor. The cofactor is heme.

It catalyses the reaction (9Z)-octadecenoate + O2 = (8R)-hydroperoxy-(9Z)-octadecenoate. The enzyme catalyses (9Z)-octadecenoate + O2 = 10-hydroperoxy-(8E)-octadecenoate. It carries out the reaction (9Z,12Z)-octadecadienoate + O2 = (8E,10R,12Z)-10-hydroperoxyoctadeca-8,12-dienoate. The catalysed reaction is (9Z,12Z,15Z)-octadecatrienoate + O2 = (10R)-hydroperoxy-(8E,12Z,15Z)-octadecatrienoate. It catalyses the reaction (9Z,12Z,15Z)-octadecatrienoate + O2 = (8R)-hydroperoxy-(9Z,12Z,15Z)-octadecatrienoate. The enzyme catalyses (11Z,14Z)-eicosadienoate + O2 = 12-hydroperoxy-(10E,14Z)-eicosadienoate. It carries out the reaction (11Z,14Z,17Z)-eicosatrienoate + O2 = 12-hydroperoxy-(10E,14Z,17Z)-eicosatrienoate. The catalysed reaction is (12R,13S)-epoxy-(9Z)-octadecenoate + O2 = (12R,13S)-epoxy-(10R)-hydroperoxy-(8E)-octadecenoate. It catalyses the reaction (8E,10R,12Z)-10-hydroperoxyoctadeca-8,12-dienoate = (12S,13R)-epoxy-(10R)-hydroxy-(8E)-octadecenoate. The enzyme catalyses (10R)-hydroperoxy-(8E,12Z,15Z)-octadecatrienoate = 12,13-epoxy-(10R)-hydroxy-(8E,15Z)-octadecadienoate. It carries out the reaction 12-hydroperoxy-(10E,14Z)-eicosadienoate = 10,11-epoxy-12-hydroxy-(14Z)-eicosenoate. The catalysed reaction is 12-hydroperoxy-(10E,14Z,17Z)-eicosatrienoate = 14,15-epoxy-12-hydroxy-(10E,17Z)-eicosadienoate. It catalyses the reaction (13R)-hydroperoxy-(9Z,11E)-octadecadienoate = (12R,13R)-epoxy-(11S)-hydroxy-(9Z)-octadecenoate. The enzyme catalyses (13S)-hydroperoxy-(9Z,11E)-octadecadienoate = (12R,13R)-epoxy-(11S)-hydroxy-(9Z)-octadecenoate. It carries out the reaction 12-hydroperoxy-(10E,14Z)-eicosadienoate = 14,15-epoxy-12-hydroxy-(10E)-eicosenoate. The catalysed reaction is 12-hydroperoxy-(10E,14Z,17Z)-eicosatrienoate = 10,11-epoxy-12-hydroxy-(14Z,17Z)-eicosadienoate. Bifunctional dioxygenase (DOX)-epoxy alcohol synthase (EAS) that converts linoleic acid (18:2n-6) sequentially to 10(R)-hydroperoxy-8(E),12(Z)-octadecadienoic acid (10R-HPODE) and 10R-HPODE further to 12 S(13R)-epoxy-10(R)-hydroxy-8(E)-octadecenoic acid as the end product. Oxygenation at C-10 occurs by retention of the pro-R hydrogen of C-8 of 18:2n-6, suggesting antarafacial hydrogen abstraction and oxygenation. The epoxy alcohol is formed from 10R-HPODE, likely by heterolytic cleavage of the dioxygen bond and subsequent intramolecular epoxidation of the 12(Z) double bond. The DOX domain is also able to oxygenate position C-8 of linoleic acid to produce 8(R)-hydroperoxy-8(E),12(Z)-octadecadienoic acid (8R-HPODE). Moreover, the DOX domain can oxygenate alpha-linolenic acid (18:3n-3) at C-8 or C-10 to produce respectively 8HOTrE and 10HOTrE, oleic acid (18:1n-9) at C-8 or C-10 to produce respectively 8-H(P)OME and 10-H(P)OME (with 8R stereoisomer to over 95%), eicosadienoic acid (20:2n-6) at C-10 or C-12 to produce respectively 10(11)-epoxy-12-hydroxy-14(Z)-eicosenoic acid and 14(15)-epoxy-12-hydroxy-10(E)-eicosenoic acid, as well as eicosatrienoic acid (20:3n-3) at C-10 or C-12 to produce respectively 10(11)-epoxy-12-hydroxy-14(Z),17(Z)-eicosadienoic acid and 14(15)-epoxy-12-hydroxy-14(Z),17(Z)-eicosadienoic acid. On the other side, the enzyme EAS domain can also catalyze the conversion of 10HOTrE into 12(13)-epoxy-10(R)-hydroxy-8(E),15(Z)-octadecadienoic acid, 13-R-HPODE into the stereoisomers of 12(13)-epoxy-11-hydroxy-9(Z)-octadecenoic acids (erythro/threo, 1:4), as well as 13S-HPODE into the stereoisomers of 12(13)-epoxy-11-hydroxy-9(Z)-octadecenoic acids (erythro/threo, 1:4) (EAS activity). Gamma-linolenic acid (18:3n-6) is not a substrate. This chain is Bifunctional dioxygenase (DOX)-epoxy alcohol synthase (EAS), found in Pyricularia oryzae (strain 70-15 / ATCC MYA-4617 / FGSC 8958) (Rice blast fungus).